We begin with the raw amino-acid sequence, 380 residues long: Kappa-type opioid receptor (380 aa).

The Extracellular segment spans residues 1–57 (MESPIQIFRGDPGPTCSPSACLLPNSSSWFPNWAESDSNGSVGSEDQQLESAHISPA). N-linked (GlcNAc...) asparagine glycosylation is found at Asn-25 and Asn-39. A helical membrane pass occupies residues 58 to 85 (IPVIITAVYSVVFVVGLVGNSLVMFVII). Topologically, residues 86–95 (RYTKMKTATN) are cytoplasmic. Residues 96–119 (IYIFNLALADALVTTTMPFQSAVY) form a helical membrane-spanning segment. The Extracellular portion of the chain corresponds to 120-132 (LMNSWPFGDVLCK). Cys-131 and Cys-210 are disulfide-bonded. A helical membrane pass occupies residues 133–154 (IVISIDYYNMFTSIFTLTMMSV). The Cytoplasmic segment spans residues 155–173 (DRYIAVCHPVKALDFRTPL). Residues 174–196 (KAKIINICIWLLASSVGISAIVL) traverse the membrane as a helical segment. Residues 197-222 (GGTKVREDVDVIECSLQFPDDEYSWW) are Extracellular-facing. The helical transmembrane segment at 223 to 247 (DLFMKICVFVFAFVIPVLIIIVCYT) threads the bilayer. The Cytoplasmic portion of the chain corresponds to 248 to 274 (LMILRLKSVRLLSGSREKDRNLRRITK). A helical membrane pass occupies residues 275-296 (LVLVVVAVFIICWTPIHIFILV). Topologically, residues 297-311 (EALGSTSHSTAALSS) are extracellular. Residues 312-333 (YYFCIALGYTNSSLNPVLYAFL) form a helical membrane-spanning segment. The Cytoplasmic segment spans residues 334–380 (DENFKRCFRDFCFPIKMRMERQSTNRVRNTVQDPASMRDVGGMNKPV). Cys-345 is lipidated: S-palmitoyl cysteine.

This sequence belongs to the G-protein coupled receptor 1 family. In terms of assembly, interacts with NHERF1. Interacts with GABARAPL1. Detected in brain (at protein level). Brain (neocortex, hippocampus, amygdala, medial habenula, hypothalamus, locus ceruleus, and parabrachial nucleus).

The protein resides in the cell membrane. In terms of biological role, G-protein coupled opioid receptor that functions as a receptor for endogenous alpha-neoendorphins and dynorphins, but has low affinity for beta-endorphins. Also functions as a receptor for various synthetic opioids and for the psychoactive diterpene salvinorin A. Ligand binding causes a conformation change that triggers signaling via guanine nucleotide-binding proteins (G proteins) and modulates the activity of down-stream effectors, such as adenylate cyclase. Signaling leads to the inhibition of adenylate cyclase activity. Inhibits neurotransmitter release by reducing calcium ion currents and increasing potassium ion conductance. Plays a role in the perception of pain. Plays a role in mediating reduced physical activity upon treatment with synthetic opioids. Plays a role in the regulation of salivation in response to synthetic opioids. May play a role in arousal and regulation of autonomic and neuroendocrine functions. The polypeptide is Kappa-type opioid receptor (Oprk1) (Mus musculus (Mouse)).